The chain runs to 317 residues: Alkylsulfatase (317 aa).

Residue histidine 78 participates in substrate binding. Residues histidine 105 and aspartate 107 each contribute to the Fe cation site. Position 108 (valine 108) interacts with substrate. Threonine 132 contributes to the 2-oxoglutarate binding site. Position 261 (histidine 261) interacts with Fe cation. Arginine 272 and arginine 276 together coordinate 2-oxoglutarate.

Belongs to the TfdA dioxygenase family. Homotetramer. It depends on Fe(2+) as a cofactor.

In terms of biological role, alpha-ketoglutarate-dependent dioxygenase that in vitro catalyzes the oxygenolytic release of sulfite from hexylsulfate. The polypeptide is Alkylsulfatase (Acinetobacter baylyi (strain ATCC 33305 / BD413 / ADP1)).